A 170-amino-acid chain; its full sequence is RNA pyrophosphohydrolase (170 aa).

In terms of domain architecture, Nudix hydrolase spans 8-158 (PYRTCVGMML…KRPVYERVVK (151 aa)). The Nudix box signature appears at 46-67 (GGVDPGEDTWLAAKRELYEETS).

Belongs to the Nudix hydrolase family. RppH subfamily. A divalent metal cation serves as cofactor.

Its function is as follows. Accelerates the degradation of transcripts by removing pyrophosphate from the 5'-end of triphosphorylated RNA, leading to a more labile monophosphorylated state that can stimulate subsequent ribonuclease cleavage. This is RNA pyrophosphohydrolase from Nitrobacter winogradskyi (strain ATCC 25391 / DSM 10237 / CIP 104748 / NCIMB 11846 / Nb-255).